A 66-amino-acid polypeptide reads, in one-letter code: Large ribosomal subunit protein bL33c (66 aa).

It belongs to the bacterial ribosomal protein bL33 family.

Its subcellular location is the plastid. It is found in the chloroplast. In Adiantum capillus-veneris (Maidenhair fern), this protein is Large ribosomal subunit protein bL33c.